Reading from the N-terminus, the 166-residue chain is Ubiquitin-conjugating enzyme E2-18 kDa (166 aa).

Residues 5–165 (MALRRLMKEY…VRRLARKTLG (161 aa)) enclose the UBC core domain. The active-site Glycyl thioester intermediate is the Cys90. A Glycyl cysteine thioester (Cys-Gly) (interchain with G-Cter in ubiquitin) cross-link involves residue Cys90.

It belongs to the ubiquitin-conjugating enzyme family. In terms of processing, autoubiquitinated at Cys-90; undergoes 'Lys-48'-linked polyubiquitination, which leads to proteasome-dependent protein degradation.

It catalyses the reaction S-ubiquitinyl-[E1 ubiquitin-activating enzyme]-L-cysteine + [E2 ubiquitin-conjugating enzyme]-L-cysteine = [E1 ubiquitin-activating enzyme]-L-cysteine + S-ubiquitinyl-[E2 ubiquitin-conjugating enzyme]-L-cysteine.. The protein operates within protein modification; protein ubiquitination. In terms of biological role, catalyzes the covalent attachment of ubiquitin to other proteins. Functions in degradation of misfolded or regulated proteins localized in the endoplasmic reticulum (ER) lumen or membrane via the ubiquitin-proteasome system. Cognate E2 conjugating enzyme for the doa10 ubiquitin ligase complex, which is part of the ERAD-C pathway responsible for the rapid degradation of membrane proteins with misfolded cytoplasmic domains, and of the hrd1 ubiquitin ligase complex, which is part of the ERAD-L and ERAD-M pathways responsible for the rapid degradation of soluble lumenal and membrane proteins with misfolded lumenal domains (ERAD-L), or ER-membrane proteins with misfolded transmembrane domains (ERAD-M). Together with hrd1, required for the degradation of the transcription factor sre1 precursor in the absence of its binding partner scp1. Has a role in the formation of chromatin structures that influence the localization of transcriptional silencing factors. This chain is Ubiquitin-conjugating enzyme E2-18 kDa (ubc7), found in Schizosaccharomyces pombe (strain 972 / ATCC 24843) (Fission yeast).